The primary structure comprises 241 residues: 1-(5-phosphoribosyl)-5-[(5-phosphoribosylamino)methylideneamino] imidazole-4-carboxamide isomerase (241 aa).

D10 acts as the Proton acceptor in catalysis. Residue D131 is the Proton donor of the active site.

This sequence belongs to the HisA/HisF family.

It localises to the cytoplasm. It catalyses the reaction 1-(5-phospho-beta-D-ribosyl)-5-[(5-phospho-beta-D-ribosylamino)methylideneamino]imidazole-4-carboxamide = 5-[(5-phospho-1-deoxy-D-ribulos-1-ylimino)methylamino]-1-(5-phospho-beta-D-ribosyl)imidazole-4-carboxamide. It functions in the pathway amino-acid biosynthesis; L-histidine biosynthesis; L-histidine from 5-phospho-alpha-D-ribose 1-diphosphate: step 4/9. The sequence is that of 1-(5-phosphoribosyl)-5-[(5-phosphoribosylamino)methylideneamino] imidazole-4-carboxamide isomerase from Bifidobacterium adolescentis (strain ATCC 15703 / DSM 20083 / NCTC 11814 / E194a).